The primary structure comprises 332 residues: 4-hydroxythreonine-4-phosphate dehydrogenase (332 aa).

His-138 and Thr-139 together coordinate substrate. Residues His-168, His-213, and His-269 each coordinate a divalent metal cation. Substrate contacts are provided by Lys-277, Asn-286, and Arg-295.

Belongs to the PdxA family. As to quaternary structure, homodimer. Requires Zn(2+) as cofactor. The cofactor is Mg(2+). It depends on Co(2+) as a cofactor.

It is found in the cytoplasm. The catalysed reaction is 4-(phosphooxy)-L-threonine + NAD(+) = 3-amino-2-oxopropyl phosphate + CO2 + NADH. The protein operates within cofactor biosynthesis; pyridoxine 5'-phosphate biosynthesis; pyridoxine 5'-phosphate from D-erythrose 4-phosphate: step 4/5. In terms of biological role, catalyzes the NAD(P)-dependent oxidation of 4-(phosphooxy)-L-threonine (HTP) into 2-amino-3-oxo-4-(phosphooxy)butyric acid which spontaneously decarboxylates to form 3-amino-2-oxopropyl phosphate (AHAP). This Vibrio parahaemolyticus serotype O3:K6 (strain RIMD 2210633) protein is 4-hydroxythreonine-4-phosphate dehydrogenase.